The chain runs to 226 residues: Ribose-5-phosphate isomerase A (226 aa).

Substrate-binding positions include 33–36, 86–89, and 99–102; these read TGST, DGAD, and KGGG. Glutamate 108 serves as the catalytic Proton acceptor. Lysine 126 contacts substrate.

It belongs to the ribose 5-phosphate isomerase family. Homodimer.

The catalysed reaction is aldehydo-D-ribose 5-phosphate = D-ribulose 5-phosphate. It participates in carbohydrate degradation; pentose phosphate pathway; D-ribose 5-phosphate from D-ribulose 5-phosphate (non-oxidative stage): step 1/1. Catalyzes the reversible conversion of ribose-5-phosphate to ribulose 5-phosphate. In Bordetella parapertussis (strain 12822 / ATCC BAA-587 / NCTC 13253), this protein is Ribose-5-phosphate isomerase A.